We begin with the raw amino-acid sequence, 273 residues long: Type IV secretion system protein PtlF (273 aa).

The signal sequence occupies residues 1 to 20 (MMAARMMAAGLAATALSAHA).

This sequence belongs to the TrbG/VirB9 family. Forms a complex with PtlI.

It is found in the cell outer membrane. Its function is as follows. Component of the type IV secretion system ptl required for secretion of assembled pertussis toxin (PTX) through the outer membrane. The chain is Type IV secretion system protein PtlF (ptlF) from Bordetella pertussis (strain Tohama I / ATCC BAA-589 / NCTC 13251).